Reading from the N-terminus, the 209-residue chain is Imidazole glycerol phosphate synthase subunit HisH (209 aa).

The Glutamine amidotransferase type-1 domain maps to 1-205 (MIAIIDYGMG…KGVVETWKSS (205 aa)). The active-site Nucleophile is the Cys79. Residues His180 and Glu182 contribute to the active site.

Heterodimer of HisH and HisF.

The protein localises to the cytoplasm. It carries out the reaction 5-[(5-phospho-1-deoxy-D-ribulos-1-ylimino)methylamino]-1-(5-phospho-beta-D-ribosyl)imidazole-4-carboxamide + L-glutamine = D-erythro-1-(imidazol-4-yl)glycerol 3-phosphate + 5-amino-1-(5-phospho-beta-D-ribosyl)imidazole-4-carboxamide + L-glutamate + H(+). It catalyses the reaction L-glutamine + H2O = L-glutamate + NH4(+). It participates in amino-acid biosynthesis; L-histidine biosynthesis; L-histidine from 5-phospho-alpha-D-ribose 1-diphosphate: step 5/9. Functionally, IGPS catalyzes the conversion of PRFAR and glutamine to IGP, AICAR and glutamate. The HisH subunit catalyzes the hydrolysis of glutamine to glutamate and ammonia as part of the synthesis of IGP and AICAR. The resulting ammonia molecule is channeled to the active site of HisF. In Bacillus cereus (strain AH187), this protein is Imidazole glycerol phosphate synthase subunit HisH.